A 496-amino-acid chain; its full sequence is Probable malate:quinone oxidoreductase (496 aa).

The protein belongs to the MQO family. The cofactor is FAD.

The catalysed reaction is (S)-malate + a quinone = a quinol + oxaloacetate. It functions in the pathway carbohydrate metabolism; tricarboxylic acid cycle; oxaloacetate from (S)-malate (quinone route): step 1/1. The chain is Probable malate:quinone oxidoreductase from Flavobacterium psychrophilum (strain ATCC 49511 / DSM 21280 / CIP 103535 / JIP02/86).